The following is a 379-amino-acid chain: Leukocyte elastase inhibitor A (379 aa).

Ser300 bears the Phosphoserine mark. The segment at 351-379 (EFTVDHPFIFFIRHNPTSNVLFLGRVCSP) is CARD-binding motif (CBM).

This sequence belongs to the serpin family. Ov-serpin subfamily. Monomer. Interacts (via C-terminus) with CASP1 and CASP4 (via CARD domain); these interactions regulate the activity of inflammatory caspases. In terms of tissue distribution, ubiquitous with higher expression in pancreas, spleen and bone marrow.

It is found in the secreted. The protein resides in the cytoplasm. Its subcellular location is the cytolytic granule. It localises to the early endosome. In terms of biological role, neutrophil serine protease inhibitor that plays an essential role in the regulation of the innate immune response, inflammation and cellular homeostasis. Acts primarily to protect the cell from proteases released in the cytoplasm during stress or infection. These proteases are important in killing microbes but when released from granules, these potent enzymes also destroy host proteins and contribute to mortality. Regulates the activity of the neutrophil proteases elastase, cathepsin G, proteinase-3, chymase, chymotrypsin, and kallikrein-3. Also acts as a potent intracellular inhibitor of granzyme H. During inflammation, limits the activity of inflammatory caspases CASP1 and CASP4 by suppressing their caspase-recruitment domain (CARD) oligomerization and enzymatic activation. In addition, promotes the proliferation of beta-cells when secreted. This Mus musculus (Mouse) protein is Leukocyte elastase inhibitor A (Serpinb1a).